The chain runs to 108 residues: Protein S100-A15A (108 aa).

An EF-hand domain is found at 53 to 88; the sequence is KEPYYITELFQAADKNKDNQICFDEFLYILGKLVKD. Positions 66, 68, 70, 72, and 77 each coordinate Ca(2+).

It belongs to the S-100 family.

The protein is Protein S100-A15A (S100A15A) of Pongo abelii (Sumatran orangutan).